Reading from the N-terminus, the 248-residue chain is Aspartate/glutamate leucyltransferase (248 aa).

This sequence belongs to the R-transferase family. Bpt subfamily.

It localises to the cytoplasm. It catalyses the reaction N-terminal L-glutamyl-[protein] + L-leucyl-tRNA(Leu) = N-terminal L-leucyl-L-glutamyl-[protein] + tRNA(Leu) + H(+). The enzyme catalyses N-terminal L-aspartyl-[protein] + L-leucyl-tRNA(Leu) = N-terminal L-leucyl-L-aspartyl-[protein] + tRNA(Leu) + H(+). Functionally, functions in the N-end rule pathway of protein degradation where it conjugates Leu from its aminoacyl-tRNA to the N-termini of proteins containing an N-terminal aspartate or glutamate. This Methylobacterium sp. (strain 4-46) protein is Aspartate/glutamate leucyltransferase.